Here is a 297-residue protein sequence, read N- to C-terminus: MNVRRSLLGLTFCTCYLASHLTNKYVLSVLKFTYPTLFQGWQTFIGGLLLHMSWKLGWVELHSSPRSDVLIWLPASALFVGIIYAGSKALSRLAVPVFFILHNVAEVLTCGYQKCVWKEKTSLSKICSALFLLAAAGCLPFQDSQFDPDGYFWALIHIFCVGSYKILRKSRKPTVLSDIDQQYLNYIFSMVLLAFASHPTGDLFGALDFPFLYFYRFHGSCCASGVLGFFLMLSTVRLRSILAPGQCAAWILCAKVVTAGLSMLLFDMALTKATVGCFLLGGLGEALLVFSERRSSS.

The next 10 membrane-spanning stretches (helical) occupy residues 7 to 29 (LLGLTFCTCYLASHLTNKYVLSV), 32 to 52 (FTYPTLFQGWQTFIGGLLLHM), 69 to 89 (VLIWLPASALFVGIIYAGSKA), 93 to 113 (LAVPVFFILHNVAEVLTCGYQ), 121 to 141 (TSLSKICSALFLLAAAGCLPF), 146 to 166 (FDPDGYFWALIHIFCVGSYKI), 187 to 207 (IFSMVLLAFASHPTGDLFGAL), 211 to 231 (FLYFYRFHGSCCASGVLGFFL), 250 to 270 (WILCAKVVTAGLSMLLFDMAL), and 271 to 291 (TKATVGCFLLGGLGEALLVFS).

The protein belongs to the nucleotide-sugar transporter family. SLC35A subfamily. Widely expressed with high expression in lung.

Its subcellular location is the golgi apparatus. The protein resides in the cis-Golgi network membrane. Functionally, golgi-localized UDP-N-acetylglucosamine (UDP-GlcNAc) transporter that transports UDP-N-acetylglucosamine into Golgi lumen. Contributes to lysosomal targeting of NPC2, a key protein required for lysosomal cholesterol exiting, and that utilizes the mannose-6-phosphate (M6P) modification pathway for its lysosomal targeting. The chain is UDP-N-acetylglucosamine transporter TMEM241 (Tmem241) from Mus musculus (Mouse).